Consider the following 61-residue polypeptide: Large ribosomal subunit protein bL32 (61 aa).

A compositionally biased stretch (basic residues) spans 1-18; that stretch reads MAIVPKRKTSKQRKRKRQ. Residues 1–20 are disordered; that stretch reads MAIVPKRKTSKQRKRKRQTH.

This sequence belongs to the bacterial ribosomal protein bL32 family.

This Mycoplasmopsis pulmonis (strain UAB CTIP) (Mycoplasma pulmonis) protein is Large ribosomal subunit protein bL32 (rpmF).